The following is a 94-amino-acid chain: Ribonuclease P protein component 1 (94 aa).

Belongs to the eukaryotic/archaeal RNase P protein component 1 family. In terms of assembly, consists of a catalytic RNA component and at least 4-5 protein subunits.

It is found in the cytoplasm. It catalyses the reaction Endonucleolytic cleavage of RNA, removing 5'-extranucleotides from tRNA precursor.. In terms of biological role, part of ribonuclease P, a protein complex that generates mature tRNA molecules by cleaving their 5'-ends. The protein is Ribonuclease P protein component 1 of Haloarcula marismortui (strain ATCC 43049 / DSM 3752 / JCM 8966 / VKM B-1809) (Halobacterium marismortui).